We begin with the raw amino-acid sequence, 127 residues long: Probable tautomerase YusQ (127 aa).

Proline 2 serves as the catalytic Proton acceptor; via imino nitrogen.

This sequence belongs to the 4-oxalocrotonate tautomerase family.

The protein is Probable tautomerase YusQ (yusQ) of Bacillus subtilis (strain 168).